Here is a 343-residue protein sequence, read N- to C-terminus: Protein RecA (343 aa).

66–73 (GPESSGKT) lines the ATP pocket.

The protein belongs to the RecA family.

The protein localises to the cytoplasm. Its function is as follows. Can catalyze the hydrolysis of ATP in the presence of single-stranded DNA, the ATP-dependent uptake of single-stranded DNA by duplex DNA, and the ATP-dependent hybridization of homologous single-stranded DNAs. It interacts with LexA causing its activation and leading to its autocatalytic cleavage. This is Protein RecA from Nitrosomonas europaea (strain ATCC 19718 / CIP 103999 / KCTC 2705 / NBRC 14298).